The following is a 331-amino-acid chain: Holliday junction branch migration complex subunit RuvB (331 aa).

Residues Met1–Tyr182 are large ATPase domain (RuvB-L). Residues Leu21, Arg22, Gly63, Lys66, Thr67, Thr68, Glu129–Phe131, Arg172, Tyr182, and Arg219 each bind ATP. Thr67 is a Mg(2+) binding site. A small ATPAse domain (RuvB-S) region spans residues Asn183–Gln253. A head domain (RuvB-H) region spans residues Ala256–Lys331. Positions 292, 311, and 316 each coordinate DNA.

It belongs to the RuvB family. In terms of assembly, homohexamer. Forms an RuvA(8)-RuvB(12)-Holliday junction (HJ) complex. HJ DNA is sandwiched between 2 RuvA tetramers; dsDNA enters through RuvA and exits via RuvB. An RuvB hexamer assembles on each DNA strand where it exits the tetramer. Each RuvB hexamer is contacted by two RuvA subunits (via domain III) on 2 adjacent RuvB subunits; this complex drives branch migration. In the full resolvosome a probable DNA-RuvA(4)-RuvB(12)-RuvC(2) complex forms which resolves the HJ.

Its subcellular location is the cytoplasm. The enzyme catalyses ATP + H2O = ADP + phosphate + H(+). In terms of biological role, the RuvA-RuvB-RuvC complex processes Holliday junction (HJ) DNA during genetic recombination and DNA repair, while the RuvA-RuvB complex plays an important role in the rescue of blocked DNA replication forks via replication fork reversal (RFR). RuvA specifically binds to HJ cruciform DNA, conferring on it an open structure. The RuvB hexamer acts as an ATP-dependent pump, pulling dsDNA into and through the RuvAB complex. RuvB forms 2 homohexamers on either side of HJ DNA bound by 1 or 2 RuvA tetramers; 4 subunits per hexamer contact DNA at a time. Coordinated motions by a converter formed by DNA-disengaged RuvB subunits stimulates ATP hydrolysis and nucleotide exchange. Immobilization of the converter enables RuvB to convert the ATP-contained energy into a lever motion, pulling 2 nucleotides of DNA out of the RuvA tetramer per ATP hydrolyzed, thus driving DNA branch migration. The RuvB motors rotate together with the DNA substrate, which together with the progressing nucleotide cycle form the mechanistic basis for DNA recombination by continuous HJ branch migration. Branch migration allows RuvC to scan DNA until it finds its consensus sequence, where it cleaves and resolves cruciform DNA. This is Holliday junction branch migration complex subunit RuvB from Staphylococcus haemolyticus (strain JCSC1435).